We begin with the raw amino-acid sequence, 133 residues long: Vesicle transport protein GOT1A (133 aa).

The Cytoplasmic portion of the chain corresponds to 1-9; the sequence is MISITEWQK. Residues 10–30 traverse the membrane as a helical segment; it reads IGVGITGFGVFFILFGILLYF. Residue D31 is a topological domain, lumenal. Residues 32 to 52 form a helical membrane-spanning segment; the sequence is SVLLAFGNLLFLTGLSLIIGL. Residues 53-68 lie on the Cytoplasmic side of the membrane; sequence RRTFAFFFQRHKLKGT. Residues 69-89 form a helical membrane-spanning segment; sequence SFFLGGVAIVLLRWPLLGMLL. The Lumenal portion of the chain corresponds to 90-92; sequence EAY. Residues 93 to 113 traverse the membrane as a helical segment; it reads GFISLFKGFFPVVFGFLGSAF. The Cytoplasmic portion of the chain corresponds to 114–133; sequence NIPFLSTLFQKLQGSSSSMV.

Belongs to the GOT1 family.

The protein localises to the golgi apparatus membrane. May be involved in fusion of ER-derived transport vesicles with the Golgi complex. In Mus musculus (Mouse), this protein is Vesicle transport protein GOT1A.